The primary structure comprises 289 residues: Shikimate kinase (289 aa).

84–94 lines the ATP pocket; that stretch reads PVASGLSSSSA.

This sequence belongs to the GHMP kinase family. Archaeal shikimate kinase subfamily.

The protein localises to the cytoplasm. The enzyme catalyses shikimate + ATP = 3-phosphoshikimate + ADP + H(+). It participates in metabolic intermediate biosynthesis; chorismate biosynthesis; chorismate from D-erythrose 4-phosphate and phosphoenolpyruvate: step 5/7. The protein is Shikimate kinase (aroK) of Methanothermobacter thermautotrophicus (strain ATCC 29096 / DSM 1053 / JCM 10044 / NBRC 100330 / Delta H) (Methanobacterium thermoautotrophicum).